The sequence spans 417 residues: D-inositol 3-phosphate glycosyltransferase (417 aa).

His10 contacts 1D-myo-inositol 3-phosphate. UDP-N-acetyl-alpha-D-glucosamine-binding positions include 16–17 (QP) and Gly24. 1D-myo-inositol 3-phosphate-binding positions include 21–26 (DAGGMN), Lys79, Tyr112, Thr136, and Arg156. The UDP-N-acetyl-alpha-D-glucosamine site is built by Arg230, Lys235, and Gln296. Residues Tyr305, Arg306, and Ala308 each coordinate Mg(2+). Residues Glu318 and Glu326 each coordinate UDP-N-acetyl-alpha-D-glucosamine. Thr332 contributes to the Mg(2+) binding site.

This sequence belongs to the glycosyltransferase group 1 family. MshA subfamily. Homodimer.

It catalyses the reaction 1D-myo-inositol 3-phosphate + UDP-N-acetyl-alpha-D-glucosamine = 1D-myo-inositol 2-acetamido-2-deoxy-alpha-D-glucopyranoside 3-phosphate + UDP + H(+). Catalyzes the transfer of a N-acetyl-glucosamine moiety to 1D-myo-inositol 3-phosphate to produce 1D-myo-inositol 2-acetamido-2-deoxy-glucopyranoside 3-phosphate in the mycothiol biosynthesis pathway. In Actinosynnema mirum (strain ATCC 29888 / DSM 43827 / JCM 3225 / NBRC 14064 / NCIMB 13271 / NRRL B-12336 / IMRU 3971 / 101), this protein is D-inositol 3-phosphate glycosyltransferase.